We begin with the raw amino-acid sequence, 144 residues long: Small ribosomal subunit protein bS6 (144 aa).

A disordered region spans residues 92-144 (KVDGHDEGPSVQMQKRDDRGDREERGDRGDRGDRGPRGDRGPREDRGPRPERR). Over residues 93–144 (VDGHDEGPSVQMQKRDDRGDREERGDRGDRGDRGPRGDRGPREDRGPRPERR) the composition is skewed to basic and acidic residues.

This sequence belongs to the bacterial ribosomal protein bS6 family.

Binds together with bS18 to 16S ribosomal RNA. In Rhodobacter capsulatus (strain ATCC BAA-309 / NBRC 16581 / SB1003), this protein is Small ribosomal subunit protein bS6 (rpsF).